A 106-amino-acid polypeptide reads, in one-letter code: COX assembly mitochondrial protein homolog (106 aa).

The residue at position 2 (alanine 2) is an N-acetylalanine. Residues 28-71 (KERCSEQVQDFTKCCKNSGVLMVVKCRKENSALKECLTAYYNDP) enclose the CHCH domain. Short sequence motifs (cx9C motif) lie at residues 31–41 (CSEQVQDFTKC) and 53–63 (CRKENSALKEC). 2 cysteine pairs are disulfide-bonded: cysteine 31–cysteine 63 and cysteine 41–cysteine 53.

The protein belongs to the CMC family. Component of the MITRAC (mitochondrial translation regulation assembly intermediate of cytochrome c oxidase complex) complex, the core components of this complex being COA3/MITRAC12 and COX14.

Its subcellular location is the mitochondrion. Component of the MITRAC (mitochondrial translation regulation assembly intermediate of cytochrome c oxidase complex) complex, that regulates cytochrome c oxidase assembly. The protein is COX assembly mitochondrial protein homolog (CMC1) of Homo sapiens (Human).